The following is a 310-amino-acid chain: Putative dihydroorotate dehydrogenase A (fumarate) (310 aa).

Substrate contacts are provided by residues Lys-45, 69 to 73 (NSMGL), and Asn-128. 45-46 (KT) provides a ligand contact to FMN. Asn-128 contributes to the FMN binding site. The active-site Nucleophile is Cys-131. The FMN site is built by Lys-165 and Val-193. A substrate-binding site is contributed by 194 to 195 (NS). Residues Gly-220, 248–249 (GG), and 270–271 (GT) each bind FMN.

Belongs to the dihydroorotate dehydrogenase family. Type 1 subfamily. In terms of assembly, homodimer. FMN is required as a cofactor.

The protein resides in the cytoplasm. It carries out the reaction (S)-dihydroorotate + fumarate = orotate + succinate. It participates in pyrimidine metabolism; UMP biosynthesis via de novo pathway. Catalyzes the conversion of dihydroorotate to orotate with fumarate as the electron acceptor. In Streptococcus agalactiae serotype Ia (strain ATCC 27591 / A909 / CDC SS700), this protein is Putative dihydroorotate dehydrogenase A (fumarate) (pyrD).